The sequence spans 159 residues: 17.7 kDa class I heat shock protein (159 aa).

The sHSP domain maps to 45-159; sequence DAAAFAGARI…PDVKSIQISG (115 aa).

This sequence belongs to the small heat shock protein (HSP20) family. As to quaternary structure, may form oligomeric structures.

It localises to the cytoplasm. This chain is 17.7 kDa class I heat shock protein (HSP17.7), found in Oryza sativa subsp. japonica (Rice).